A 337-amino-acid polypeptide reads, in one-letter code: Phosphoenolpyruvate transferase (337 aa).

Aspartate 69 lines the 7,8-didemethyl-8-hydroxy-5-deazariboflavin pocket.

Belongs to the CofD family. In terms of assembly, homodimer. The cofactor is Mg(2+).

The catalysed reaction is enolpyruvoyl-2-diphospho-5'-guanosine + 7,8-didemethyl-8-hydroxy-5-deazariboflavin = dehydro coenzyme F420-0 + GMP + H(+). It functions in the pathway cofactor biosynthesis; coenzyme F420 biosynthesis. In terms of biological role, catalyzes the transfer of the phosphoenolpyruvate moiety from enoylpyruvoyl-2-diphospho-5'-guanosine (EPPG) to 7,8-didemethyl-8-hydroxy-5-deazariboflavin (FO) with the formation of dehydro coenzyme F420-0 and GMP. This chain is Phosphoenolpyruvate transferase, found in Mycobacterium avium (strain 104).